We begin with the raw amino-acid sequence, 457 residues long: Bifunctional protein GlmU (457 aa).

The segment at 1 to 229 is pyrophosphorylase; sequence MSNSAKSVVI…LSEMEGVNNR (229 aa). Residues 11-14, Lys25, Gln76, 81-82, 103-105, Gly140, Glu154, Asn169, and Asn227 each bind UDP-N-acetyl-alpha-D-glucosamine; these read LAAG, GT, and YGD. Asp105 serves as a coordination point for Mg(2+). Asn227 lines the Mg(2+) pocket. The interval 230–250 is linker; sequence LQLSALERIYQSEQAEQLLLA. Positions 251-457 are N-acetyltransferase; that stretch reads GVMLLDPARF…GWKRPVKEKK (207 aa). UDP-N-acetyl-alpha-D-glucosamine is bound by residues Arg333 and Lys351. His363 functions as the Proton acceptor in the catalytic mechanism. UDP-N-acetyl-alpha-D-glucosamine contacts are provided by Tyr366 and Asn377. Residues Ala380, 386 to 387, Ser405, Ala423, and Arg440 each bind acetyl-CoA; that span reads NY.

This sequence in the N-terminal section; belongs to the N-acetylglucosamine-1-phosphate uridyltransferase family. In the C-terminal section; belongs to the transferase hexapeptide repeat family. Homotrimer. It depends on Mg(2+) as a cofactor.

The protein resides in the cytoplasm. The catalysed reaction is alpha-D-glucosamine 1-phosphate + acetyl-CoA = N-acetyl-alpha-D-glucosamine 1-phosphate + CoA + H(+). It catalyses the reaction N-acetyl-alpha-D-glucosamine 1-phosphate + UTP + H(+) = UDP-N-acetyl-alpha-D-glucosamine + diphosphate. It functions in the pathway nucleotide-sugar biosynthesis; UDP-N-acetyl-alpha-D-glucosamine biosynthesis; N-acetyl-alpha-D-glucosamine 1-phosphate from alpha-D-glucosamine 6-phosphate (route II): step 2/2. It participates in nucleotide-sugar biosynthesis; UDP-N-acetyl-alpha-D-glucosamine biosynthesis; UDP-N-acetyl-alpha-D-glucosamine from N-acetyl-alpha-D-glucosamine 1-phosphate: step 1/1. Its pathway is bacterial outer membrane biogenesis; LPS lipid A biosynthesis. Functionally, catalyzes the last two sequential reactions in the de novo biosynthetic pathway for UDP-N-acetylglucosamine (UDP-GlcNAc). The C-terminal domain catalyzes the transfer of acetyl group from acetyl coenzyme A to glucosamine-1-phosphate (GlcN-1-P) to produce N-acetylglucosamine-1-phosphate (GlcNAc-1-P), which is converted into UDP-GlcNAc by the transfer of uridine 5-monophosphate (from uridine 5-triphosphate), a reaction catalyzed by the N-terminal domain. The polypeptide is Bifunctional protein GlmU (Photorhabdus laumondii subsp. laumondii (strain DSM 15139 / CIP 105565 / TT01) (Photorhabdus luminescens subsp. laumondii)).